The sequence spans 326 residues: 4-hydroxythreonine-4-phosphate dehydrogenase (326 aa).

Substrate is bound by residues His132 and Thr133. Residues His163, His208, and His263 each coordinate a divalent metal cation. The substrate site is built by Lys271, Asn280, and Arg289.

The protein belongs to the PdxA family. In terms of assembly, homodimer. The cofactor is Zn(2+). Mg(2+) is required as a cofactor. Co(2+) serves as cofactor.

The protein resides in the cytoplasm. The enzyme catalyses 4-(phosphooxy)-L-threonine + NAD(+) = 3-amino-2-oxopropyl phosphate + CO2 + NADH. It functions in the pathway cofactor biosynthesis; pyridoxine 5'-phosphate biosynthesis; pyridoxine 5'-phosphate from D-erythrose 4-phosphate: step 4/5. Functionally, catalyzes the NAD(P)-dependent oxidation of 4-(phosphooxy)-L-threonine (HTP) into 2-amino-3-oxo-4-(phosphooxy)butyric acid which spontaneously decarboxylates to form 3-amino-2-oxopropyl phosphate (AHAP). The polypeptide is 4-hydroxythreonine-4-phosphate dehydrogenase (Roseobacter denitrificans (strain ATCC 33942 / OCh 114) (Erythrobacter sp. (strain OCh 114))).